Consider the following 343-residue polypeptide: Protein RecA (343 aa).

66-73 lines the ATP pocket; that stretch reads GPESSGKT.

This sequence belongs to the RecA family.

It localises to the cytoplasm. Its function is as follows. Can catalyze the hydrolysis of ATP in the presence of single-stranded DNA, the ATP-dependent uptake of single-stranded DNA by duplex DNA, and the ATP-dependent hybridization of homologous single-stranded DNAs. It interacts with LexA causing its activation and leading to its autocatalytic cleavage. In Rickettsia conorii (strain ATCC VR-613 / Malish 7), this protein is Protein RecA.